A 378-amino-acid polypeptide reads, in one-letter code: MQDGRTTLSKFLIDTLDRQPCSTETARNAGLSALLIDVAAAIKSISAMLTKGALGGNYGSAQSINTHGEEQKKLDVATNEIFVQQCEWDGLLAAMVSEEMESVYAIPPGYPRGDYLLAFDPLDGSSNIDINGVVGSIFSVLRNGEGNGNANEKNGSDPRGTVGESAFLRPGCEQVAAGYAVYGPSTMLVLSVGNGTHGFTLEREIGNFVLTHSNIRIPEDTVEFAINASNERFWEPPVRRYVQECKDGRSGCRASDFNMRWIASMVAEVHRILMRGGVFMYPRDSKTPAMEGRLRLLYEANPMSFLVEQAGGLSITGRERILDVVPRALHGRVPVILGSKHEVERIGRYHGEYDRGEDQPFTSPLFSRRSLFLPGFTA.

The Mg(2+) site is built by Glu98, Asp120, Leu122, and Asp123. Residues 123 to 126 (DGSS) and Asn227 contribute to the substrate site. A Mg(2+)-binding site is contributed by Glu299.

It belongs to the FBPase class 1 family. In terms of assembly, homotetramer. Mg(2+) is required as a cofactor.

The protein resides in the cytoplasm. The catalysed reaction is beta-D-fructose 1,6-bisphosphate + H2O = beta-D-fructose 6-phosphate + phosphate. It functions in the pathway carbohydrate biosynthesis; gluconeogenesis. This chain is Fructose-1,6-bisphosphatase class 1 2, found in Paraburkholderia xenovorans (strain LB400).